We begin with the raw amino-acid sequence, 115 residues long: Ribonuclease P protein component (115 aa).

It belongs to the RnpA family. As to quaternary structure, consists of a catalytic RNA component (M1 or rnpB) and a protein subunit.

The enzyme catalyses Endonucleolytic cleavage of RNA, removing 5'-extranucleotides from tRNA precursor.. RNaseP catalyzes the removal of the 5'-leader sequence from pre-tRNA to produce the mature 5'-terminus. It can also cleave other RNA substrates such as 4.5S RNA. The protein component plays an auxiliary but essential role in vivo by binding to the 5'-leader sequence and broadening the substrate specificity of the ribozyme. The chain is Ribonuclease P protein component from Phytoplasma australiense.